Here is a 598-residue protein sequence, read N- to C-terminus: UvrABC system protein C (598 aa).

Residues 14 to 91 enclose the GIY-YIG domain; the sequence is DSPGCYLHKD…IQKNMPKYNI (78 aa). A UVR domain is found at 196–231; it reads DKIIEDLRSKMLAASEEMAFERAAEYRDLISGIATM.

The protein belongs to the UvrC family. In terms of assembly, interacts with UvrB in an incision complex.

Its subcellular location is the cytoplasm. Functionally, the UvrABC repair system catalyzes the recognition and processing of DNA lesions. UvrC both incises the 5' and 3' sides of the lesion. The N-terminal half is responsible for the 3' incision and the C-terminal half is responsible for the 5' incision. The sequence is that of UvrABC system protein C from Streptococcus pyogenes serotype M12 (strain MGAS2096).